We begin with the raw amino-acid sequence, 584 residues long: Alpha-glucosidase MAL32 (584 aa).

The Nucleophile role is filled by aspartate 214. Glutamate 276 serves as the catalytic Proton donor.

It belongs to the glycosyl hydrolase 13 family.

The catalysed reaction is Hydrolysis of terminal, non-reducing (1-&gt;4)-linked alpha-D-glucose residues with release of alpha-D-glucose.. This Saccharomyces cerevisiae (strain ATCC 204508 / S288c) (Baker's yeast) protein is Alpha-glucosidase MAL32 (MAL32).